The following is a 105-amino-acid chain: CRISPR-associated endoribonuclease Cas2 1 (105 aa).

Asp20 is a Mg(2+) binding site.

This sequence belongs to the CRISPR-associated endoribonuclease Cas2 protein family. Homodimer, forms a heterotetramer with a Cas1 homodimer. Mg(2+) is required as a cofactor.

In terms of biological role, CRISPR (clustered regularly interspaced short palindromic repeat), is an adaptive immune system that provides protection against mobile genetic elements (viruses, transposable elements and conjugative plasmids). CRISPR clusters contain sequences complementary to antecedent mobile elements and target invading nucleic acids. CRISPR clusters are transcribed and processed into CRISPR RNA (crRNA). Functions as a ssRNA-specific endoribonuclease. Involved in the integration of spacer DNA into the CRISPR cassette. The sequence is that of CRISPR-associated endoribonuclease Cas2 1 (cas21) from Nitrosomonas europaea (strain ATCC 19718 / CIP 103999 / KCTC 2705 / NBRC 14298).